The sequence spans 497 residues: Sperm motility kinase Z (497 aa).

The region spanning 28-275 (YTVLKTLSQH…AQDLLSHPWL (248 aa)) is the Protein kinase domain. ATP-binding positions include 34–42 (LSQHGTTEV) and Lys57. The active-site Proton acceptor is Asp146. Positions 292 to 332 (FPDPDIMAAMKNIGFHVQDIRESLKHRKFDETMATYNLLRA) constitute a UBA domain. Disordered stretches follow at residues 383–410 (TEEH…GRSQ) and 439–460 (SSQA…SCPL).

This sequence belongs to the protein kinase superfamily. CAMK Ser/Thr protein kinase family. Smok subfamily.

The enzyme catalyses L-seryl-[protein] + ATP = O-phospho-L-seryl-[protein] + ADP + H(+). The catalysed reaction is L-threonyl-[protein] + ATP = O-phospho-L-threonyl-[protein] + ADP + H(+). May play a role in sperm motility, especially in the regulation of flagellar function. In Mus musculus (Mouse), this protein is Sperm motility kinase Z (Gm4922).